The chain runs to 1311 residues: Ubiquitin carboxyl-terminal hydrolase 36 (1311 aa).

2 stretches are compositionally biased toward low complexity: residues A120–S134 and S156–S174. Residues A120–R189 are disordered. The 322-residue stretch at A212–D533 folds into the USP domain. Catalysis depends on C221, which acts as the Nucleophile. The Proton acceptor role is filled by H492. Positions N546–V575 are disordered. Positions Q560–Q572 are enriched in low complexity. S581 carries the phosphoserine modification. Disordered regions lie at residues T587–Q620, K640–N1095, and D1136–S1311. Composition is skewed to low complexity over residues T605–N616, A660–Q716, and T759–T774. Residue T767 is modified to Phosphothreonine. A phosphoserine mark is found at S787 and S789. Over residues S795–T826 the composition is skewed to low complexity. Positions A836–V853 are enriched in basic residues. Polar residues predominate over residues P869–K879. Basic and acidic residues predominate over residues Q880–F889. Residues N896–Q905 are compositionally biased toward basic residues. The span at G910–L920 shows a compositional bias: acidic residues. Low complexity-rich tracts occupy residues N925–N942 and V950–A979. Positions P980–P989 are enriched in pro residues. S982 is modified (phosphoserine). Position 985 is a phosphothreonine (T985). Residue S988 is modified to Phosphoserine. A compositionally biased stretch (acidic residues) spans D1006 to E1020. The span at P1037–T1050 shows a compositional bias: low complexity. S1047 carries the post-translational modification Phosphoserine. Residue T1050 is modified to Phosphothreonine. Positions F1060–P1081 are enriched in polar residues. Low complexity-rich tracts occupy residues V1154–A1176 and T1204–N1221. A compositionally biased stretch (polar residues) spans Q1246 to N1255. The span at G1267–G1276 shows a compositional bias: gly residues.

The protein belongs to the peptidase C19 family. In terms of assembly, interacts with atms/PAF1, but not with CycT.

It localises to the nucleus. The protein resides in the nucleolus. The enzyme catalyses Thiol-dependent hydrolysis of ester, thioester, amide, peptide and isopeptide bonds formed by the C-terminal Gly of ubiquitin (a 76-residue protein attached to proteins as an intracellular targeting signal).. Functionally, required for maintaining multiple types of adult stem cells, including male and female germline, epithelial follicle cell and intestinal stem cells. May function as a transcriptional repressor by continually deubiquiting histone H2B at the promoters of genes critical for cellular differentiation, thereby preventing histone H3 'Lys-4' trimethylation (H3K4). Controls selective autophagy activation by ubiquitinated proteins. The protein is Ubiquitin carboxyl-terminal hydrolase 36 (Usp36) of Drosophila willistoni (Fruit fly).